Reading from the N-terminus, the 179-residue chain is uncharacterized protein (179 aa).

This is an uncharacterized protein from Encephalitozoon cuniculi (strain GB-M1) (Microsporidian parasite).